Reading from the N-terminus, the 319-residue chain is MKKIGVLTSGGDSPGMNATIRAVVRRGIYMGLDIYGIYYGFSGLINGNIEKLEIGSVGDIIHRGGTILHTSRSEEFKTEMGQQKGFDNLKELGIEGLIVIGGDGSFKGAEKLSQMGLPVIGVPGTIDNDIPETEMSIGFDTALNTVIEAIDRIRDTATSHERIFVIEVMGRDCGNLALWSGLAGGAESVLIPEIDYDMEKVIERLKHGYKRGKKHSIIIVAEGVKPGAEIGKEIKERAGLDNRVTVLGHVQRGGTPTAYDRMLGSRLGAKAVDLLVAGESDKMIGMRDYKLVPVQFKDVFSKIEEPDYDIYELSQSLSI.

Gly11 serves as a coordination point for ATP. ADP is bound at residue 21-25 (RAVVR). Residues 72 to 73 (RS) and 102 to 105 (GDGS) contribute to the ATP site. A Mg(2+)-binding site is contributed by Asp103. 125 to 127 (TID) lines the substrate pocket. Asp127 (proton acceptor) is an active-site residue. Arg154 contributes to the ADP binding site. Residues Arg162 and 169-171 (MGR) each bind substrate. ADP contacts are provided by residues 185–187 (GAE), Arg211, and 213–215 (KKH). Residues Glu222, Arg243, and 249–252 (HVQR) contribute to the substrate site.

This sequence belongs to the phosphofructokinase type A (PFKA) family. ATP-dependent PFK group I subfamily. Prokaryotic clade 'B1' sub-subfamily. In terms of assembly, homotetramer. The cofactor is Mg(2+).

It localises to the cytoplasm. The catalysed reaction is beta-D-fructose 6-phosphate + ATP = beta-D-fructose 1,6-bisphosphate + ADP + H(+). Its pathway is carbohydrate degradation; glycolysis; D-glyceraldehyde 3-phosphate and glycerone phosphate from D-glucose: step 3/4. With respect to regulation, allosterically activated by ADP and other diphosphonucleosides, and allosterically inhibited by phosphoenolpyruvate. Its function is as follows. Catalyzes the phosphorylation of D-fructose 6-phosphate to fructose 1,6-bisphosphate by ATP, the first committing step of glycolysis. This is ATP-dependent 6-phosphofructokinase from Natranaerobius thermophilus (strain ATCC BAA-1301 / DSM 18059 / JW/NM-WN-LF).